Here is a 59-residue protein sequence, read N- to C-terminus: Alpha-like toxin CsEv5 (59 aa).

In terms of domain architecture, LCN-type CS-alpha/beta spans lysine 1 to cysteine 59. 4 disulfide bridges follow: cysteine 11-cysteine 59, cysteine 15-cysteine 35, cysteine 21-cysteine 40, and cysteine 25-cysteine 42.

This sequence belongs to the long (4 C-C) scorpion toxin superfamily. Sodium channel inhibitor family. Expressed by the venom gland.

It is found in the secreted. In terms of biological role, binds voltage-independently sodium channels (Nav) and inhibits the inactivation of the activated channels, thereby blocking neuronal transmission. Is highly toxic to insects and barely toxic to mammals. As it does not compete with the classical alpha-toxin AaH2, this toxin is considered as an alpha-like toxin. This is Alpha-like toxin CsEv5 from Centruroides sculpturatus (Arizona bark scorpion).